Here is a 142-residue protein sequence, read N- to C-terminus: Immunoglobulin omega chain (142 aa).

A signal peptide spans 1 to 19; the sequence is MAWTSVLLMLLAHLTGCGP. The framework-1 stretch occupies residues 20 to 41; the sequence is QPMVHQPPSASSSLGATIRLSC. A disulfide bridge connects residues C41 and C115. The complementarity-determining-1 stretch occupies residues 42 to 56; that stretch reads TLSNDHNIGIYSIYW. The segment at 57 to 70 is framework-2; that stretch reads YQQRPGHPPRFLLR. The interval 71 to 81 is complementarity-determining-2; the sequence is YFSHSDKHQGP. A framework-3 region spans residues 82–115; the sequence is DIPPRFSGSKDTARNLGYLSISELQPEDEAVYYC.

This sequence belongs to the immunoglobulin superfamily. Only expressed by pre-B-cells.

Associates with the Ig-mu chain to form a molecular complex that is expressed on the surface of pre-B-cells. This complex presumably regulates Ig gene rearrangements in the early steps of B-cell differentiation. The protein is Immunoglobulin omega chain of Mus musculus (Mouse).